A 221-amino-acid polypeptide reads, in one-letter code: UPF0502 protein PLES_16071 (221 aa).

The protein belongs to the UPF0502 family.

The chain is UPF0502 protein PLES_16071 from Pseudomonas aeruginosa (strain LESB58).